A 273-amino-acid polypeptide reads, in one-letter code: 2,3,4,5-tetrahydropyridine-2,6-dicarboxylate N-succinyltransferase (273 aa).

The substrate site is built by Arg105 and Asp142.

It belongs to the transferase hexapeptide repeat family. In terms of assembly, homotrimer.

It localises to the cytoplasm. It catalyses the reaction (S)-2,3,4,5-tetrahydrodipicolinate + succinyl-CoA + H2O = (S)-2-succinylamino-6-oxoheptanedioate + CoA. The protein operates within amino-acid biosynthesis; L-lysine biosynthesis via DAP pathway; LL-2,6-diaminopimelate from (S)-tetrahydrodipicolinate (succinylase route): step 1/3. The polypeptide is 2,3,4,5-tetrahydropyridine-2,6-dicarboxylate N-succinyltransferase (Bordetella avium (strain 197N)).